We begin with the raw amino-acid sequence, 522 residues long: Amphoterin-induced protein 2 (522 aa).

The signal sequence occupies residues 1-39 (MSLRVHTLPTLLGAVVRPGCRELLCLLMITVTVGPGASG). An LRRNT domain is found at 40 to 68 (VCPTACICATDIVSCTNKNLSKVPGNLFR). The Extracellular portion of the chain corresponds to 40–398 (VCPTACICAT…RSHAHEAFNT (359 aa)). 2 disulfides stabilise this stretch: C41–C47 and C45–C54. N58 carries N-linked (GlcNAc...) asparagine glycosylation. LRR repeat units follow at residues 69-90 (LIKR…WIPV), 94-115 (KLNT…SFST), 118-139 (NLKC…VFQE), 142-163 (VLEV…AFGG), 166-187 (QLQK…LYVG), and 193-214 (ELMF…HINL). N104 carries an N-linked (GlcNAc...) asparagine glycan. The LRRCT domain occupies 228–284 (NPFVCDCSLYSLLVFWYRRHFSSVMDFKNDYTCRLWSDSRHSRQVLLLQDSFMNCSD). 2 disulfide bridges follow: C232/C260 and C234/C282. N-linked (GlcNAc...) asparagine glycosylation is found at N281, N288, N345, N373, N381, and N384. One can recognise an Ig-like C2-type domain in the interval 289-379 (GSFRALGFIH…RLLNETVDVT (91 aa)). C310 and C363 are joined by a disulfide. Residues 399-419 (AFTTLAACVASIVLVLLYLYL) traverse the membrane as a helical segment. At 420 to 522 (TPCPCKCKTK…FSDTPFVAST (103 aa)) the chain is on the cytoplasmic side. The interval 501–522 (RGKSDSDSVNSVFSDTPFVAST) is disordered.

The protein belongs to the immunoglobulin superfamily. AMIGO family. As to quaternary structure, binds itself as well as AMIGO1 and AMIGO3. As to expression, highest levels in breast, ovary, cervix, and uterus. Lower levels in lung, colon, and rectum. Differentially expressed in 56% of thyroid, 57% of pancreatic and 45% of stomach cancers.

Its subcellular location is the cell membrane. The protein resides in the nucleus. Required for depolarization-dependent survival of cultured cerebellar granule neurons. May mediate homophilic as well as heterophilic cell-cell interaction with AMIGO1 or AMIGO3. May contribute to signal transduction through its intracellular domain. May be required for tumorigenesis of a subset of gastric adenocarcinomas. This is Amphoterin-induced protein 2 from Homo sapiens (Human).